A 155-amino-acid polypeptide reads, in one-letter code: SsrA-binding protein (155 aa).

Belongs to the SmpB family.

It localises to the cytoplasm. Functionally, required for rescue of stalled ribosomes mediated by trans-translation. Binds to transfer-messenger RNA (tmRNA), required for stable association of tmRNA with ribosomes. tmRNA and SmpB together mimic tRNA shape, replacing the anticodon stem-loop with SmpB. tmRNA is encoded by the ssrA gene; the 2 termini fold to resemble tRNA(Ala) and it encodes a 'tag peptide', a short internal open reading frame. During trans-translation Ala-aminoacylated tmRNA acts like a tRNA, entering the A-site of stalled ribosomes, displacing the stalled mRNA. The ribosome then switches to translate the ORF on the tmRNA; the nascent peptide is terminated with the 'tag peptide' encoded by the tmRNA and targeted for degradation. The ribosome is freed to recommence translation, which seems to be the essential function of trans-translation. The sequence is that of SsrA-binding protein from Bacillus cytotoxicus (strain DSM 22905 / CIP 110041 / 391-98 / NVH 391-98).